A 163-amino-acid chain; its full sequence is Large ribosomal subunit protein uL10 (163 aa).

Belongs to the universal ribosomal protein uL10 family. In terms of assembly, part of the ribosomal stalk of the 50S ribosomal subunit. The N-terminus interacts with L11 and the large rRNA to form the base of the stalk. The C-terminus forms an elongated spine to which L12 dimers bind in a sequential fashion forming a multimeric L10(L12)X complex.

Functionally, forms part of the ribosomal stalk, playing a central role in the interaction of the ribosome with GTP-bound translation factors. The polypeptide is Large ribosomal subunit protein uL10 (Actinobacillus succinogenes (strain ATCC 55618 / DSM 22257 / CCUG 43843 / 130Z)).